The following is a 306-amino-acid chain: Ribonuclease Z (306 aa).

7 residues coordinate Zn(2+): His63, His65, Asp67, His68, His140, Asp211, and His269. Asp67 acts as the Proton acceptor in catalysis.

Belongs to the RNase Z family. Homodimer. Zn(2+) serves as cofactor.

The enzyme catalyses Endonucleolytic cleavage of RNA, removing extra 3' nucleotides from tRNA precursor, generating 3' termini of tRNAs. A 3'-hydroxy group is left at the tRNA terminus and a 5'-phosphoryl group is left at the trailer molecule.. Functionally, zinc phosphodiesterase, which displays some tRNA 3'-processing endonuclease activity. Probably involved in tRNA maturation, by removing a 3'-trailer from precursor tRNA. The protein is Ribonuclease Z of Listeria innocua serovar 6a (strain ATCC BAA-680 / CLIP 11262).